We begin with the raw amino-acid sequence, 403 residues long: Palmitoyltransferase ZDHHC23-A (403 aa).

The Cytoplasmic portion of the chain corresponds to M1–T70. The helical transmembrane segment at V71 to L91 threads the bilayer. R92 is a topological domain (lumenal). Residues V93–L113 form a helical membrane-spanning segment. Residues W114–R125 are Cytoplasmic-facing. The chain crosses the membrane as a helical span at residues T126–T146. Residues E147–D153 lie on the Lumenal side of the membrane. The chain crosses the membrane as a helical span at residues V154–V174. Over R175–R268 the chain is Cytoplasmic. The DHHC domain occupies K225–L275. C255 (S-palmitoyl cysteine intermediate) is an active-site residue. The chain crosses the membrane as a helical span at residues Q269–L289. The Lumenal segment spans residues R290 to T319. Residues C320 to I340 traverse the membrane as a helical segment. At N341–V403 the chain is on the cytoplasmic side.

The protein belongs to the DHHC palmitoyltransferase family.

The protein localises to the golgi apparatus membrane. Its subcellular location is the golgi apparatus. It localises to the trans-Golgi network membrane. The catalysed reaction is L-cysteinyl-[protein] + hexadecanoyl-CoA = S-hexadecanoyl-L-cysteinyl-[protein] + CoA. Its function is as follows. Palmitoyltransferase that could catalyze the addition of palmitate onto various protein substrates and be involved in a variety of cellular processes. The protein is Palmitoyltransferase ZDHHC23-A (zdhhc23a) of Danio rerio (Zebrafish).